The following is a 415-amino-acid chain: Tyrosine--tRNA ligase (415 aa).

The 'HIGH' region motif lies at proline 54 to histidine 63. The 'KMSKS' region signature appears at lysine 248–threonine 252. Lysine 251 provides a ligand contact to ATP. Residues alanine 351–alanine 415 form the S4 RNA-binding domain.

It belongs to the class-I aminoacyl-tRNA synthetase family. TyrS type 2 subfamily. As to quaternary structure, homodimer.

Its subcellular location is the cytoplasm. The enzyme catalyses tRNA(Tyr) + L-tyrosine + ATP = L-tyrosyl-tRNA(Tyr) + AMP + diphosphate + H(+). Catalyzes the attachment of tyrosine to tRNA(Tyr) in a two-step reaction: tyrosine is first activated by ATP to form Tyr-AMP and then transferred to the acceptor end of tRNA(Tyr). This is Tyrosine--tRNA ligase from Synechococcus sp. (strain CC9902).